Here is a 95-residue protein sequence, read N- to C-terminus: Small ribosomal subunit protein uS19 (95 aa).

The segment at 73–95 is disordered; the sequence is EFSPTRTYRGHGADKNAKGSKKK.

Belongs to the universal ribosomal protein uS19 family.

In terms of biological role, protein S19 forms a complex with S13 that binds strongly to the 16S ribosomal RNA. The sequence is that of Small ribosomal subunit protein uS19 from Deinococcus radiodurans (strain ATCC 13939 / DSM 20539 / JCM 16871 / CCUG 27074 / LMG 4051 / NBRC 15346 / NCIMB 9279 / VKM B-1422 / R1).